The chain runs to 565 residues: MARPKNVKHIFVTGGVISSLGKGILSASLGMLLKSRGLKVAIQKYDPYINVDPGTMSPYQHGEVYVTDDGAETDLDLGHYERFLDEATSQASNLTMGRVYKSVIDKERSGEYLGGTVQVVPHVIDEIKDRMAELAKNGNLDVLITEIGGTIGDIESLPFLEAMRQMKLEMGERNLLNIHLTFVPYIKAACELKTKPTQHSVKMLLETGIQPDILVCRSEKPLSREIKNKVGHFCNVNELDVIGLNDCDTIYEVPLMLLKEKLDLRVMKKLGLKKFREPNLEYWRDFCNKVLHPTEGEVTIGVCGKYTEYPDAYKSILEAFIHAGASNNVRVTIKLLRAEDAEAGSFDFKKEMQGVSGVLVAPGFGDRGIEGKISFIRYAREQNIPFFGICLGMQCATIEFARNVCGLHDANSTEFNKRTRFPVIDLMEQQKKVKEKGGTMRLGSYPCIIKEGSKAYDIYKKFLINERHRHRFEFNNTYRSALEEQGMVFSGTSPNGELVEIIELKDHRWFVGVQFHPELKSRVQQVHPLFHGFVAAAKEYEKGSRQMELTVDMPSFMPVENEPAQ.

An amidoligase domain region spans residues 1–272; the sequence is MARPKNVKHI…DLRVMKKLGL (272 aa). Residue Ser18 coordinates CTP. Ser18 serves as a coordination point for UTP. An ATP-binding site is contributed by 19 to 24; that stretch reads SLGKGI. Tyr59 is a binding site for L-glutamine. Asp76 contributes to the ATP binding site. Residues Asp76 and Glu146 each contribute to the Mg(2+) site. Residues 153–155, 193–198, and Lys229 each bind CTP; these read DIE and KTKPTQ. UTP is bound by residues 193 to 198 and Lys229; that span reads KTKPTQ. The Glutamine amidotransferase type-1 domain occupies 299–543; that stretch reads TIGVCGKYTE…VAAAKEYEKG (245 aa). Position 363 (Gly363) interacts with L-glutamine. Residue Cys390 is the Nucleophile; for glutamine hydrolysis of the active site. Residues 391–394, Glu414, and Arg471 each bind L-glutamine; that span reads LGMQ. Catalysis depends on residues His516 and Glu518.

The protein belongs to the CTP synthase family. As to quaternary structure, homotetramer.

It catalyses the reaction UTP + L-glutamine + ATP + H2O = CTP + L-glutamate + ADP + phosphate + 2 H(+). The catalysed reaction is L-glutamine + H2O = L-glutamate + NH4(+). The enzyme catalyses UTP + NH4(+) + ATP = CTP + ADP + phosphate + 2 H(+). It participates in pyrimidine metabolism; CTP biosynthesis via de novo pathway; CTP from UDP: step 2/2. Allosterically activated by GTP, when glutamine is the substrate; GTP has no effect on the reaction when ammonia is the substrate. The allosteric effector GTP functions by stabilizing the protein conformation that binds the tetrahedral intermediate(s) formed during glutamine hydrolysis. Inhibited by the product CTP, via allosteric rather than competitive inhibition. Its function is as follows. Catalyzes the ATP-dependent amination of UTP to CTP with either L-glutamine or ammonia as the source of nitrogen. Regulates intracellular CTP levels through interactions with the four ribonucleotide triphosphates. The polypeptide is CTP synthase (Chlorobium phaeobacteroides (strain DSM 266 / SMG 266 / 2430)).